The following is a 405-amino-acid chain: Corticosteroid-binding globulin (405 aa).

The first 22 residues, 1–22 (MPLLLYTCLLWLPTSGLWTVQA), serve as a signal peptide directing secretion. 3 N-linked (GlcNAc...) asparagine glycosylation sites follow: Asn31, Asn96, and Asn176. Position 254 (Gln254) interacts with cortisol. Residue Asn260 is glycosylated (N-linked (GlcNAc...) asparagine). Asn286 is a binding site for cortisol. Residues Asn330 and Asn369 are each glycosylated (N-linked (GlcNAc...) asparagine). The cortisol site is built by His390 and Trp393.

This sequence belongs to the serpin family. N-glycosylated; binds 5 oligosaccharide chains. Post-translationally, glycosylation in position Asn-260 is needed for steroid binding. As to expression, plasma; synthesized in liver. Has also been identified in a number of glycocorticoid responsive cells.

The protein localises to the secreted. In terms of biological role, major transport protein for glucocorticoids and progestins in the blood of almost all vertebrate species. The sequence is that of Corticosteroid-binding globulin (SERPINA6) from Homo sapiens (Human).